The following is a 117-amino-acid chain: UPF0295 protein GTNG_0491 (117 aa).

The next 2 membrane-spanning stretches (helical) occupy residues 12 to 32 and 42 to 62; these read IRTFALSLIFVGVIVMYLGLF and LFMVLGLLFLVASGIVYFWIG.

It belongs to the UPF0295 family.

Its subcellular location is the cell membrane. In Geobacillus thermodenitrificans (strain NG80-2), this protein is UPF0295 protein GTNG_0491.